The primary structure comprises 138 residues: Acidic phospholipase A2 inhibitor chain HPD-1I (138 aa).

The first 16 residues, 1–16 (MRTLWIVAVCLIGVEG), serve as a signal peptide directing secretion. Intrachain disulfides connect C42–C131, C44–C60, C59–C111, C65–C138, C66–C104, C73–C97, and C91–C102.

As to quaternary structure, heterodimer of an acidic and a basic chain; non-covalently linked. The basic chain is toxic and has phospholipase A2 activity (chain HDP-1P (AC Q1RP79) or HDP-2P (AC Q1RP78)) and the acidic chain is non-toxic and functions as its inhibitor (chain HPD-1I). As to expression, expressed by the venom gland.

Its subcellular location is the secreted. Heterodimer: slightly affects neuromuscular transmission acting presynaptically. It has a low catalytic activity, a low anticoagulant activity and weakly inhibits ADP-induced platelet aggregation. Its function is as follows. Monomer: has no activity (neurotoxic, catalytic, anticoagulant and a ADP-induced platelet aggregation), but inhibits phospholipase A2. The protein is Acidic phospholipase A2 inhibitor chain HPD-1I of Vipera nikolskii (Nikolsky's adder).